The chain runs to 231 residues: Elongation factor 1-delta 1 (231 aa).

At A2 the chain carries N-acetylalanine. Residues 10–73 (DAGLKKLDEH…LRISGVSAEG (64 aa)) form the GST C-terminal domain. Disordered stretches follow at residues 85 to 108 (TEEA…EDDD) and 116 to 135 (ETEE…KAST). Over residues 119 to 129 (EEKKAAEERAA) the composition is skewed to basic and acidic residues.

Belongs to the EF-1-beta/EF-1-delta family. In terms of assembly, EF-1 is composed of 4 subunits: alpha, beta (1B-alpha=beta'), delta (1B-beta), and gamma (1B-gamma).

EF-1-beta and EF-1-delta stimulate the exchange of GDP bound to EF-1-alpha to GTP. This is Elongation factor 1-delta 1 from Arabidopsis thaliana (Mouse-ear cress).